Reading from the N-terminus, the 197-residue chain is 3-isopropylmalate dehydratase small subunit (197 aa).

Belongs to the LeuD family. LeuD type 1 subfamily. In terms of assembly, heterodimer of LeuC and LeuD.

The enzyme catalyses (2R,3S)-3-isopropylmalate = (2S)-2-isopropylmalate. It participates in amino-acid biosynthesis; L-leucine biosynthesis; L-leucine from 3-methyl-2-oxobutanoate: step 2/4. In terms of biological role, catalyzes the isomerization between 2-isopropylmalate and 3-isopropylmalate, via the formation of 2-isopropylmaleate. In Mycobacterium sp. (strain KMS), this protein is 3-isopropylmalate dehydratase small subunit.